A 390-amino-acid chain; its full sequence is Branched-chain-amino-acid aminotransferase (390 aa).

Position 225 is an N6-(pyridoxal phosphate)lysine (lysine 225).

The protein belongs to the class-IV pyridoxal-phosphate-dependent aminotransferase family. As to quaternary structure, homodimer. Pyridoxal 5'-phosphate serves as cofactor.

It carries out the reaction L-leucine + 2-oxoglutarate = 4-methyl-2-oxopentanoate + L-glutamate. It catalyses the reaction L-isoleucine + 2-oxoglutarate = (S)-3-methyl-2-oxopentanoate + L-glutamate. The enzyme catalyses L-valine + 2-oxoglutarate = 3-methyl-2-oxobutanoate + L-glutamate. Catalyzes the first reaction in the catabolism of the essential branched chain amino acids leucine, isoleucine, and valine. This is Branched-chain-amino-acid aminotransferase from Monosiga brevicollis (Choanoflagellate).